Here is an 882-residue protein sequence, read N- to C-terminus: Pentatricopeptide repeat-containing protein At3g03580 (882 aa).

PPR repeat units follow at residues 3–37 (TRVS…GLDS), 38–68 (SDFF…VSPA), 70–104 (NVYL…KVSP), 105–139 (DKYT…GFES), 140–170 (DLFV…MPVR), 171–205 (DLVS…WIVP), 206–240 (DSFT…GVNS), 241–271 (VVVV…MDVR), 272–307 (DSVS…KPDL), 309–340 (TVSS…GFVL), 341–371 (ESTV…MECK), 372–406 (DTVS…EEQA), 407–441 (DHIT…GICI), 442–472 (DLSV…MGTG), 473–507 (DTVT…EVVP), 508–542 (DMAT…GYES), 543–573 (ELQI…MSRR), 574–608 (DVVT…GIVP), 609–639 (DSVV…MKTH), and 645–675 (MIEH…MPIK). Residues 680–755 (IWASVLRACR…NPGYSWIEVG (76 aa)) form a type E motif region. Positions 756–786 (KNVHVFSSGDDSAPQSEAIYKSLEILYSLMA) are type E(+) motif. A type DYW motif region spans residues 787 to 882 (KEGYIPDPRE…DGTCSCKDRW (96 aa)).

Belongs to the PPR family. PCMP-H subfamily.

The chain is Pentatricopeptide repeat-containing protein At3g03580 (PCMP-H23) from Arabidopsis thaliana (Mouse-ear cress).